The following is an 827-amino-acid chain: DNA gyrase subunit A (827 aa).

The region spanning 38 to 501 is the Topo IIA-type catalytic domain; that stretch reads LPDARDGLKP…SYENIDIEDL (464 aa). The O-(5'-phospho-DNA)-tyrosine intermediate role is filled by Tyr-126. The short motif at 528-534 is the GyrA-box element; it reads QNRGGKG.

Belongs to the type II topoisomerase GyrA/ParC subunit family. Heterotetramer, composed of two GyrA and two GyrB chains. In the heterotetramer, GyrA contains the active site tyrosine that forms a transient covalent intermediate with DNA, while GyrB binds cofactors and catalyzes ATP hydrolysis.

The protein resides in the cytoplasm. It carries out the reaction ATP-dependent breakage, passage and rejoining of double-stranded DNA.. Its function is as follows. A type II topoisomerase that negatively supercoils closed circular double-stranded (ds) DNA in an ATP-dependent manner to modulate DNA topology and maintain chromosomes in an underwound state. Negative supercoiling favors strand separation, and DNA replication, transcription, recombination and repair, all of which involve strand separation. Also able to catalyze the interconversion of other topological isomers of dsDNA rings, including catenanes and knotted rings. Type II topoisomerases break and join 2 DNA strands simultaneously in an ATP-dependent manner. The polypeptide is DNA gyrase subunit A (Helicobacter pylori (strain ATCC 700392 / 26695) (Campylobacter pylori)).